Consider the following 380-residue polypeptide: Protein FAM110B (380 aa).

The segment at A92–D272 is disordered. Over residues G100–S110 the composition is skewed to gly residues. Positions I127 to S138 are enriched in polar residues. Basic and acidic residues predominate over residues D153–F162. Positions K239 to S248 are enriched in low complexity. Phosphoserine is present on residues S248 and S311. Residues D327–R347 form a disordered region. The span at S336 to N345 shows a compositional bias: basic and acidic residues.

This sequence belongs to the FAM110 family.

It localises to the cytoplasm. Its subcellular location is the cytoskeleton. The protein resides in the microtubule organizing center. The protein localises to the centrosome. This chain is Protein FAM110B (FAM110B), found in Bos taurus (Bovine).